The primary structure comprises 338 residues: Fructose-1,6-bisphosphatase class 1 (338 aa).

Mg(2+) is bound by residues Glu92, Asp115, Leu117, and Asp118. Residues 118 to 121 (DGSS), Asn211, Tyr244, and Lys274 each bind substrate. Glu280 lines the Mg(2+) pocket.

The protein belongs to the FBPase class 1 family. Homotetramer. Mg(2+) serves as cofactor.

The protein localises to the cytoplasm. It catalyses the reaction beta-D-fructose 1,6-bisphosphate + H2O = beta-D-fructose 6-phosphate + phosphate. It participates in carbohydrate biosynthesis; gluconeogenesis. The sequence is that of Fructose-1,6-bisphosphatase class 1 from Photobacterium profundum (strain SS9).